The primary structure comprises 251 residues: uncharacterized protein (251 aa).

Residues 207–251 (ATPHSKRGRTKLYRKEPPGDNRSPPPWQEPHGEGLAEKLSPGPAR) form a disordered region.

This is an uncharacterized protein from Treponema pallidum (strain Nichols).